Here is a 718-residue protein sequence, read N- to C-terminus: Protein Hook homolog 3 (718 aa).

Methionine 1 is subject to N-acetylmethionine. Residues 1–164 (MFSVESLERA…QELMSKESPV (164 aa)) form a sufficient for interaction with microtubules region. Phosphoserine occurs at positions 3 and 6. In terms of domain architecture, Calponin-homology (CH) spans 10–126 (AELCESLLTW…RMLQLILGCA (117 aa)). 2 coiled-coil regions span residues 167 to 433 (GNDA…VQAQ) and 462 to 667 (EIRE…YIVS). Serine 238 is modified (phosphoserine). Positions 553–718 (EKLHEANNEL…PGHVQPATAR (166 aa)) are required for association with Golgi. The tract at residues 556-718 (HEANNELQKK…PGHVQPATAR (163 aa)) is required for interaction with MSR1. Residues 682-718 (EDRLASTGSGQSFLARQRQATSSRRSYPGHVQPATAR) are disordered. 2 positions are modified to phosphoserine: serine 693 and serine 707. Positions 696–707 (ARQRQATSSRRS) are enriched in low complexity.

This sequence belongs to the hook family. Self-associates. Component of the FTS/Hook/FHIP complex (FHF complex), composed of AKTIP/FTS, FHIP1B, and one or more members of the Hook family of proteins HOOK1, HOOK2, and HOOK3. May interact directly with AKTIP/FTS, HOOK1 and HOOK2. Associates with several subunits of the homotypic vesicular sorting complex (the HOPS complex) including VPS16 and VPS41; these interactions may be indirect. Interacts with MSR1, and this association is stimulated by ligand binding to MSR1. Interacts with microtubules. Part of a tripartite complex with dynein and dynactin, acts an adapter linking the dynein motor complex and dynactin. Interacts with dynein intermediate chain and dynactin (DCTN1). Interacts with CCDC181. Interacts with LRGUK. In terms of assembly, (Microbial infection) Interacts with Salmonella typhimurium spiC.

It is found in the cytoplasm. The protein resides in the cytoskeleton. It localises to the golgi apparatus. Functionally, acts as an adapter protein linking the dynein motor complex to various cargos and converts dynein from a non-processive to a highly processive motor in the presence of dynactin. Facilitates the interaction between dynein and dynactin and activates dynein processivity (the ability to move along a microtubule for a long distance without falling off the track). Predominantly recruits 2 dyneins, which increases both the force and speed of the microtubule motor. Component of the FTS/Hook/FHIP complex (FHF complex). The FHF complex may function to promote vesicle trafficking and/or fusion via the homotypic vesicular protein sorting complex (the HOPS complex). May regulate clearance of endocytosed receptors such as MSR1. Participates in defining the architecture and localization of the Golgi complex. FHF complex promotes the distribution of AP-4 complex to the perinuclear area of the cell. (Microbial infection) May serve as a target for the spiC protein from Salmonella typhimurium, which inactivates it, leading to a strong alteration in cellular trafficking. The chain is Protein Hook homolog 3 from Homo sapiens (Human).